Consider the following 205-residue polypeptide: Recombination protein RecR (205 aa).

Residues Cys60–Cys75 form a C4-type zinc finger. The region spanning Ser83–Ser178 is the Toprim domain.

This sequence belongs to the RecR family.

In terms of biological role, may play a role in DNA repair. It seems to be involved in an RecBC-independent recombinational process of DNA repair. It may act with RecF and RecO. This Phocaeicola vulgatus (strain ATCC 8482 / DSM 1447 / JCM 5826 / CCUG 4940 / NBRC 14291 / NCTC 11154) (Bacteroides vulgatus) protein is Recombination protein RecR.